The primary structure comprises 83 residues: MVTIRLARGGSKKRPFYHLTVTNSRNARDGRFVERVGFFNPIAAGAEVKLSVNQERVSYWLSQGAQPSERVAQLLKDAAKAAA.

It belongs to the bacterial ribosomal protein bS16 family.

The protein is Small ribosomal subunit protein bS16 of Pseudomonas putida (strain W619).